Here is a 107-residue protein sequence, read N- to C-terminus: U1-lycotoxin-Ls1w (107 aa).

An N-terminal signal peptide occupies residues 1–20 (MLKVLVVVALLVTLISYSSS). A propeptide spanning residues 21–41 (EGIDDLEADELLSLMANEQTR) is cleaved from the precursor. 4 cysteine pairs are disulfide-bonded: C44-C59, C51-C68, C58-C86, and C70-C84.

This sequence belongs to the neurotoxin 19 (CSTX) family. 04 (U1-Lctx) subfamily. In terms of tissue distribution, expressed by the venom gland.

It is found in the secreted. This Lycosa singoriensis (Wolf spider) protein is U1-lycotoxin-Ls1w.